The primary structure comprises 276 residues: Shikimate dehydrogenase (NADP(+)) (276 aa).

Shikimate is bound by residues 18–20 (SKS) and threonine 65. The active-site Proton acceptor is lysine 69. An NADP(+)-binding site is contributed by glutamate 81. Residues asparagine 90 and aspartate 106 each coordinate shikimate. NADP(+) is bound by residues 130 to 134 (GAGGA), 154 to 159 (NRTSSK), and methionine 217. Residue tyrosine 219 participates in shikimate binding. Glycine 241 contacts NADP(+).

This sequence belongs to the shikimate dehydrogenase family. In terms of assembly, homodimer.

The enzyme catalyses shikimate + NADP(+) = 3-dehydroshikimate + NADPH + H(+). It participates in metabolic intermediate biosynthesis; chorismate biosynthesis; chorismate from D-erythrose 4-phosphate and phosphoenolpyruvate: step 4/7. Its function is as follows. Involved in the biosynthesis of the chorismate, which leads to the biosynthesis of aromatic amino acids. Catalyzes the reversible NADPH linked reduction of 3-dehydroshikimate (DHSA) to yield shikimate (SA). This Vibrio atlanticus (strain LGP32) (Vibrio splendidus (strain Mel32)) protein is Shikimate dehydrogenase (NADP(+)).